Consider the following 587-residue polypeptide: Glucosylglycerate phosphorylase (587 aa).

Residue Asp236 is the Nucleophile of the active site.

The protein belongs to the glycosyl hydrolase 13 family. Glucosylglycerate phosphorylase subfamily.

It carries out the reaction (2R)-2-O-(alpha-D-glucopyranosyl)-glycerate + phosphate = (R)-glycerate + alpha-D-glucose 1-phosphate. In terms of biological role, catalyzes the reversible phosphorolysis of glucosylglycerate into alpha-D-glucose 1-phosphate (Glc1P) and D-glycerate. May be a regulator of intracellular levels of glucosylglycerate, a compatible solute that primarily protects organisms facing salt stress and very specific nutritional constraints. Cannot catalyze the phosphorolysis of sucrose. The sequence is that of Glucosylglycerate phosphorylase from Spirochaeta thermophila (strain ATCC 700085 / DSM 6578 / Z-1203).